The following is a 309-amino-acid chain: ADP,ATP carrier protein 1 (309 aa).

3 Solcar repeats span residues 11–104, 116–208, and 216–302; these read SHFG…IKSL, KWFA…FKPV, and GSFV…LQLI. The next 5 helical transmembrane spans lie at 13 to 40, 81 to 105, 114 to 134, 184 to 205, and 219 to 239; these read FGVD…VKLL, TANV…KSLL, YAKW…LSLL, FVPS…YDSF, and VASF…SYPL. Residues R86 and K98 each contribute to the ADP site. R243 lines the ADP pocket. The segment at 243-248 is important for transport activity; sequence RRRMMM. Residues 243–248 carry the Nucleotide carrier signature motif motif; sequence RRRMMM. A helical membrane pass occupies residues 279 to 299; it reads CGANIFRGVAAAGVISLYDQL.

The protein belongs to the mitochondrial carrier (TC 2.A.29) family. In terms of assembly, monomer.

The protein localises to the mitochondrion inner membrane. It catalyses the reaction ADP(in) + ATP(out) = ADP(out) + ATP(in). The matrix-open state (m-state) is inhibited by the membrane-permeable bongkrekic acid (BKA). The cytoplasmic-open state (c-state) is inhibited by the membrane-impermeable toxic inhibitor carboxyatractyloside (CATR). In terms of biological role, ADP:ATP antiporter that mediates import of ADP into the mitochondrial matrix for ATP synthesis, and export of ATP out to fuel the cell. Cycles between the cytoplasmic-open state (c-state) and the matrix-open state (m-state): operates by the alternating access mechanism with a single substrate-binding site intermittently exposed to either the cytosolic (c-state) or matrix (m-state) side of the inner mitochondrial membrane. The protein is ADP,ATP carrier protein 1 (AAC1) of Saccharomyces cerevisiae (strain ATCC 204508 / S288c) (Baker's yeast).